A 381-amino-acid chain; its full sequence is Creatine kinase M-type (381 aa).

One can recognise a Phosphagen kinase N-terminal domain in the interval 11–98 (KLNFKAEEEY…FDPIIQDRHG (88 aa)). The 243-residue stretch at 125–367 (YVLSSRVRTG…KLMVEMEKKL (243 aa)) folds into the Phosphagen kinase C-terminal domain. An ATP-binding site is contributed by 128–132 (SSRVR). The residue at position 164 (S164) is a Phosphoserine. Position 166 is a phosphothreonine (T166). S178 bears the Phosphoserine mark. At T180 the chain carries Phosphothreonine. Residue H191 participates in ATP binding. S199 is modified (phosphoserine). Residues R236 and R292 each contribute to the ATP site. Phosphothreonine is present on residues T313 and T322. ATP is bound by residues 320-325 (RGTGGV) and D335. S372 is modified (phosphoserine).

The protein belongs to the ATP:guanido phosphotransferase family. Dimer of identical or non-identical chains, which can be either B (brain type) or M (muscle type). With MM being the major form in skeletal muscle and myocardium, MB existing in myocardium, and BB existing in many tissues, especially brain.

It is found in the cytoplasm. It catalyses the reaction creatine + ATP = N-phosphocreatine + ADP + H(+). In terms of biological role, reversibly catalyzes the transfer of phosphate between ATP and various phosphogens (e.g. creatine phosphate). Creatine kinase isoenzymes play a central role in energy transduction in tissues with large, fluctuating energy demands, such as skeletal muscle, heart, brain and spermatozoa. This is Creatine kinase M-type (CKM) from Bos taurus (Bovine).